The following is a 197-amino-acid chain: uncharacterized protein (197 aa).

Basic and acidic residues predominate over residues 168-185 (QRDDFSEDSHANDPKLVG). Residues 168–197 (QRDDFSEDSHANDPKLVGDDYVPQAPEQIN) form a disordered region.

This is an uncharacterized protein from Escherichia coli (strain K12).